The following is a 381-amino-acid chain: 6-oxocyclohex-1-ene-1-carbonyl-CoA hydrolase (381 aa).

It belongs to the enoyl-CoA hydratase/isomerase family. As to quaternary structure, homohexamer.

The enzyme catalyses 6-oxocyclohex-1-ene-1-carbonyl-CoA + 2 H2O = 3-hydroxy-6-carboxyhexanoyl-CoA + H(+). It participates in aromatic compound metabolism; benzoyl-CoA degradation. Functionally, involved in the central benzoyl-CoA catabolism. Catalyzes the addition of one molecule of water to the double bond and the hydrolytic cleavage of C-C bond in the alicyclic ring, 6-oxocyclohex-1-ene-1-carbonyl-CoA (6-OCH-CoA) to yield 3-hydroxypimelyl-CoA. The polypeptide is 6-oxocyclohex-1-ene-1-carbonyl-CoA hydrolase (Geobacter metallireducens (strain ATCC 53774 / DSM 7210 / GS-15)).